Here is a 250-residue protein sequence, read N- to C-terminus: MSGHSKWSTIKFKKALKDAKRGKIFTRLIREITVAARAGGGDPASNSRLRLALDKAYGANMTKDTIERAIKRGTGELEGVDYEEVTYEGYGPGGVAILIETMTDNKVRTVAEVRHIFSKRGGNMGTAGSVAYQFKKLGLIVFPADADEDRILEAALEAGAEDVVNEGERIAVYTAPSDLHSVVLALEAAGLKPEESEMTMIPENTIEVSGEEAEKLLRLIDFLEENDDVQNVYANYDISDEEMARLEATS.

Belongs to the TACO1 family.

Its subcellular location is the cytoplasm. The chain is Probable transcriptional regulatory protein Lferr_0060 from Acidithiobacillus ferrooxidans (strain ATCC 53993 / BNL-5-31) (Leptospirillum ferrooxidans (ATCC 53993)).